The following is a 453-amino-acid chain: Cytochrome b-c1 complex subunit 2, mitochondrial (453 aa).

The N-terminal 14 residues, 1–14 (MKLLSRAGSFSRFY), are a transit peptide targeting the mitochondrion. N6-acetyllysine occurs at positions 66, 199, and 250. Ser368 carries the post-translational modification Phosphoserine.

This sequence belongs to the peptidase M16 family. UQCRC2/QCR2 subfamily. In terms of assembly, component of the ubiquinol-cytochrome c oxidoreductase (cytochrome b-c1 complex, complex III, CIII), a multisubunit enzyme composed of 11 subunits. The complex is composed of 3 respiratory subunits cytochrome b, cytochrome c1 and Rieske protein UQCRFS1, 2 core protein subunits UQCRC1/QCR1 and UQCRC2/QCR2, and 6 low-molecular weight protein subunits UQCRH/QCR6, UQCRB/QCR7, UQCRQ/QCR8, UQCR10/QCR9, UQCR11/QCR10 and subunit 9, the cleavage product of Rieske protein UQCRFS1. The complex exists as an obligatory dimer and forms supercomplexes (SCs) in the inner mitochondrial membrane with NADH-ubiquinone oxidoreductase (complex I, CI) and cytochrome c oxidase (complex IV, CIV), resulting in different assemblies (supercomplex SCI(1)III(2)IV(1) and megacomplex MCI(2)III(2)IV(2)). Interacts with RAB5IF. Interacts with STMP1. In terms of processing, acetylation of Lys-159 and Lys-250 is observed in liver mitochondria from fasted mice but not from fed mice. In terms of tissue distribution, expressed in neurons and astrocytes of the cerebral cortex and hippocampus (at protein level).

The protein resides in the mitochondrion inner membrane. In terms of biological role, component of the ubiquinol-cytochrome c oxidoreductase, a multisubunit transmembrane complex that is part of the mitochondrial electron transport chain which drives oxidative phosphorylation. The respiratory chain contains 3 multisubunit complexes succinate dehydrogenase (complex II, CII), ubiquinol-cytochrome c oxidoreductase (cytochrome b-c1 complex, complex III, CIII) and cytochrome c oxidase (complex IV, CIV), that cooperate to transfer electrons derived from NADH and succinate to molecular oxygen, creating an electrochemical gradient over the inner membrane that drives transmembrane transport and the ATP synthase. The cytochrome b-c1 complex catalyzes electron transfer from ubiquinol to cytochrome c, linking this redox reaction to translocation of protons across the mitochondrial inner membrane, with protons being carried across the membrane as hydrogens on the quinol. In the process called Q cycle, 2 protons are consumed from the matrix, 4 protons are released into the intermembrane space and 2 electrons are passed to cytochrome c. The 2 core subunits UQCRC1/QCR1 and UQCRC2/QCR2 are homologous to the 2 mitochondrial-processing peptidase (MPP) subunits beta-MPP and alpha-MPP respectively, and they seem to have preserved their MPP processing properties. May be involved in the in situ processing of UQCRFS1 into the mature Rieske protein and its mitochondrial targeting sequence (MTS)/subunit 9 when incorporated into complex III. The chain is Cytochrome b-c1 complex subunit 2, mitochondrial (Uqcrc2) from Mus musculus (Mouse).